The following is a 533-amino-acid chain: tRNA(Ile)-lysidine synthase (533 aa).

27-32 (SGGSDS) provides a ligand contact to ATP.

It belongs to the tRNA(Ile)-lysidine synthase family.

It localises to the cytoplasm. It carries out the reaction cytidine(34) in tRNA(Ile2) + L-lysine + ATP = lysidine(34) in tRNA(Ile2) + AMP + diphosphate + H(+). Functionally, ligates lysine onto the cytidine present at position 34 of the AUA codon-specific tRNA(Ile) that contains the anticodon CAU, in an ATP-dependent manner. Cytidine is converted to lysidine, thus changing the amino acid specificity of the tRNA from methionine to isoleucine. The chain is tRNA(Ile)-lysidine synthase from Rickettsia peacockii (strain Rustic).